Here is a 328-residue protein sequence, read N- to C-terminus: GMP reductase (328 aa).

Cysteine 176 acts as the Thioimidate intermediate in catalysis. 205–228 (IIADGGIRTHGDVAKSIRFGATMV) is an NADP(+) binding site.

It belongs to the IMPDH/GMPR family. GuaC type 2 subfamily.

The enzyme catalyses IMP + NH4(+) + NADP(+) = GMP + NADPH + 2 H(+). Its function is as follows. Catalyzes the irreversible NADPH-dependent deamination of GMP to IMP. It functions in the conversion of nucleobase, nucleoside and nucleotide derivatives of G to A nucleotides, and in maintaining the intracellular balance of A and G nucleotides. The protein is GMP reductase of Bacillus thuringiensis (strain Al Hakam).